The following is a 467-amino-acid chain: Ribulose bisphosphate carboxylase large chain (467 aa).

Substrate-binding residues include Xaa-106 and Thr-156. Residue Lys-158 is the Proton acceptor of the active site. Lys-160 contacts substrate. Residues Lys-184, Asp-186, and Glu-187 each contribute to the Mg(2+) site. Residue Lys-184 is modified to N6-carboxylysine. His-276 acts as the Proton acceptor in catalysis. Positions 277, 309, and 361 each coordinate substrate.

The protein belongs to the RuBisCO large chain family. Type I subfamily. Heterohexadecamer of 8 large chains and 8 small chains. The cofactor is Mg(2+).

It localises to the plastid. The protein localises to the chloroplast. The enzyme catalyses 2 (2R)-3-phosphoglycerate + 2 H(+) = D-ribulose 1,5-bisphosphate + CO2 + H2O. It carries out the reaction D-ribulose 1,5-bisphosphate + O2 = 2-phosphoglycolate + (2R)-3-phosphoglycerate + 2 H(+). Functionally, ruBisCO catalyzes two reactions: the carboxylation of D-ribulose 1,5-bisphosphate, the primary event in carbon dioxide fixation, as well as the oxidative fragmentation of the pentose substrate in the photorespiration process. Both reactions occur simultaneously and in competition at the same active site. The chain is Ribulose bisphosphate carboxylase large chain (rbcL) from Chondrus crispus (Carrageen Irish moss).